The chain runs to 252 residues: MTILFLTMVISYFGCMKAAPMKEANVRGQGSLAYPGVRTHGTLESVNGPKAGSRGLTSSSSSSLADTFEHVIEELLDEDQKVRPNEENNKDADMYTSRVMLSSQVPLEPPLLFLLEEYKNYLDAANMSMRVRRHSDPARRGELSVCDSISEWVTAADKKTAVDMSGGTVTVLEKVPVSKGQLKQYFYETKCNPMGYTKEGCRGIDKRHWNSQCRTTQSYVRALTMDSKKRIGWRFIRIDTSCVCTLTIKRGR.

A signal peptide spans 1 to 18 (MTILFLTMVISYFGCMKA). Residues 19–133 (APMKEANVRG…AANMSMRVRR (115 aa)) constitute a propeptide that is removed on maturation. Residues 43–62 (LESVNGPKAGSRGLTSSSSS) form a disordered region. Asparagine 126 carries an N-linked (GlcNAc...) asparagine glycan. Cystine bridges form between cysteine 146/cysteine 213, cysteine 191/cysteine 242, and cysteine 201/cysteine 244.

Belongs to the NGF-beta family. Monomers and homodimers. Binds to NTRK2/TRKB. Can form heterodimers with other neurotrophin family members, such as NTF3 and NTF4 (in vitro), but the physiological relevance of this is not clear. BDNF precursor form: interacts with the heterodimer formed by NGFR and SORCS2. Mature BDNF has much lower affinity for the heterodimer formed by NGFR and SORCS2. N-glycosylated and glycosulfated, contrary to mature BDNF. Post-translationally, mature BDNF is produced by proteolytic removal of the propeptide, catalyzed by a FURIN family member. In addition, the precursor form is proteolytically cleaved within the propeptide, but this is not an obligatory intermediate for the production of mature BDNF. Can be converted into mature BDNF by plasmin (PLG). As to expression, brain and central nervous system.

It localises to the secreted. Functionally, important signaling molecule that activates signaling cascades downstream of NTRK2. During development, promotes the survival and differentiation of selected neuronal populations of the peripheral and central nervous systems. Participates in axonal growth, pathfinding and in the modulation of dendritic growth and morphology. Major regulator of synaptic transmission and plasticity at adult synapses in many regions of the CNS. The versatility of BDNF is emphasized by its contribution to a range of adaptive neuronal responses including long-term potentiation (LTP), long-term depression (LTD), certain forms of short-term synaptic plasticity, as well as homeostatic regulation of intrinsic neuronal excitability. In terms of biological role, important signaling molecule that activates signaling cascades downstream of NTRK2. Activates signaling cascades via the heterodimeric receptor formed by NGFR and SORCS2. Signaling via NGFR and SORCS2 plays a role in synaptic plasticity and long-term depression (LTD). Binding to NGFR and SORCS2 promotes neuronal apoptosis. Promotes neuronal growth cone collapse. This Sus scrofa (Pig) protein is Neurotrophic factor BDNF precursor form (BDNF).